The primary structure comprises 707 residues: DCC-interacting protein 13-alpha (707 aa).

Positions 1-428 (MPGIDKLPIE…PPTARTSSSG (428 aa)) are required for RAB5A binding. The 266-residue stretch at 3-268 (GIDKLPIEET…DPLYLPDPDP (266 aa)) folds into the BAR domain. Positions 234–257 (QNVRREMDGDVETMQQTIEDLEVA) form a coiled coil. Positions 277–375 (LTRKAGYLNA…WICTINNISK (99 aa)) constitute a PH domain. Disordered regions lie at residues 397 to 433 (AVTP…LGSE), 466 to 490 (GQAK…STKS), and 636 to 707 (EKQK…ESEA). Thr399 carries the post-translational modification Phosphothreonine. Ser401 bears the Phosphoserine mark. Positions 403–414 (SFQQRHESLRPG) match the F&amp;H motif. At Ser410 the chain carries Phosphoserine; by PKA. The PID domain occupies 495 to 655 (SILHQLFIVR…EKQQKELSKQ (161 aa)). The stretch at 620 to 670 (LAKQIALHAELDRRASEKQKEIERVKEKQQKELSKQKQIEKDLEEQSRLIA) forms a coiled coil. Positions 636 to 666 (EKQKEIERVKEKQQKELSKQKQIEKDLEEQS) are enriched in basic and acidic residues. The span at 679–691 (GSEGQLVLSSSQS) shows a compositional bias: low complexity. Ser691 and Ser694 each carry phosphoserine. The span at 698–707 (EEGKKRESEA) shows a compositional bias: basic and acidic residues.

In terms of assembly, homodimer. Binds RAB5A/Rab5 through an N-terminal domain. This interaction is essential for its recruitment to endosomal membranes as well as its role in cell proliferation. Binds DCC and the catalytic domain of the inactive form of AKT2 through its PID domain. Binds PIK3CA and subunits of the NuRD/MeCP1 complex. Interacts with OCRL and INPP5B. Interacts with NTRK2. Interacts with APPL2; interaction is independent of follicle stimulating hormone stimulation; interaction is decreased by adiponectin in a time-dependent manner. Forms a complex with APPL2 and RUVBL2. Forms a complex comprising APPL2, RUVBL2, CTNNB1, HDAC1 and HDAC2; interaction reduces interaction between CTNNB1, HDAC1, HDAC2 and RUVBL2 leading to the decrease of deacetylase activity of this complex; affects the recruitment of repressive complexes to the Wnt target genes. Interacts with ANXA2. Interacts with TGFBR1; interaction is TGF beta dependent; mediates trafficking of the TGFBR1 from the endosomes to the nucleus via microtubules in a TRAF6-dependent manner. Interacts with PRKCZ. Interacts with PIK3R1 and APPL2. Interacts with ADIPOR1; ADIPOQ enhances this interaction; inhibites adiponectin-stimulated binding of APPL2 to ADIPOR1. Post-translationally, phosphorylation at Ser-410 by PKA severely impairs binding to OCRL. In terms of tissue distribution, expressed in insulin-target tissues including skeletal muscle, liver, fat, and brain.

The protein localises to the early endosome membrane. It localises to the nucleus. It is found in the cytoplasm. The protein resides in the endosome. Its subcellular location is the cell projection. The protein localises to the ruffle. It localises to the cytoplasmic vesicle. It is found in the phagosome. Multifunctional adapter protein that binds to various membrane receptors, nuclear factors and signaling proteins to regulate many processes, such as cell proliferation, immune response, endosomal trafficking and cell metabolism. Regulates signaling pathway leading to cell proliferation through interaction with RAB5A and subunits of the NuRD/MeCP1 complex. Functions as a positive regulator of innate immune response via activation of AKT1 signaling pathway by forming a complex with APPL1 and PIK3R1. Inhibits Fc-gamma receptor-mediated phagocytosis through PI3K/Akt signaling in macrophages. Regulates TLR4 signaling in activated macrophages. Involved in trafficking of the TGFBR1 from the endosomes to the nucleus via microtubules in a TRAF6-dependent manner. Plays a role in cell metabolism by regulating adiponecting and insulin signaling pathways. Required for fibroblast migration through HGF cell signaling. Positive regulator of beta-catenin/TCF-dependent transcription through direct interaction with RUVBL2/reptin resulting in the relief of RUVBL2-mediated repression of beta-catenin/TCF target genes by modulating the interactions within the beta-catenin-reptin-HDAC complex. The chain is DCC-interacting protein 13-alpha from Mus musculus (Mouse).